A 462-amino-acid chain; its full sequence is Lipase A (462 aa).

An N-terminal signal peptide occupies residues 1-21 (MRVSLRSITSLLAAATAAVLA). Cysteine 122 and cysteine 294 are joined by a disulfide. Catalysis depends on charge relay system residues serine 205, aspartate 355, and histidine 387. A disulfide bridge connects residues cysteine 371 and cysteine 415.

Belongs to the AB hydrolase superfamily. Lipase family. Monomer.

The protein localises to the secreted. The enzyme catalyses a triacylglycerol + H2O = a diacylglycerol + a fatty acid + H(+). Functionally, hydrolyzes triglycerides, with a preference for substrates with short-chain lengths (C4 to C8). Has the highest activity with tributyrin (C4), followed by tricaproin (C6) and tricaprylin (C8). Can also hydrolyze vinylacetate (C2) and triolein (C18), but with lower efficiency. Has no activity with tripalmitin (C16). This chain is Lipase A, found in Moesziomyces aphidis (Pseudozyma aphidis).